A 698-amino-acid polypeptide reads, in one-letter code: Elongation factor G (698 aa).

One can recognise a tr-type G domain in the interval 10-285; the sequence is AGTRNIGIMA…AVVDFLPNPL (276 aa). GTP-binding positions include 19–26, 83–87, and 137–140; these read AHIDAGKT, DTPGH, and NKMD.

Belongs to the TRAFAC class translation factor GTPase superfamily. Classic translation factor GTPase family. EF-G/EF-2 subfamily.

It is found in the cytoplasm. In terms of biological role, catalyzes the GTP-dependent ribosomal translocation step during translation elongation. During this step, the ribosome changes from the pre-translocational (PRE) to the post-translocational (POST) state as the newly formed A-site-bound peptidyl-tRNA and P-site-bound deacylated tRNA move to the P and E sites, respectively. Catalyzes the coordinated movement of the two tRNA molecules, the mRNA and conformational changes in the ribosome. This is Elongation factor G from Frankia casuarinae (strain DSM 45818 / CECT 9043 / HFP020203 / CcI3).